Reading from the N-terminus, the 487-residue chain is Serine/threonine-protein kinase 4 (487 aa).

M1 carries the N-acetylmethionine modification. T3 is modified (phosphothreonine). The Protein kinase domain maps to 30 to 281; it reads FDVLEKLGEG…ATQLLQHPFV (252 aa). Residues 36-44 and K59 contribute to the ATP site; that span reads LGEGSYGSV. D149 acts as the Proton acceptor in catalysis. The residue at position 183 (T183) is a Phosphothreonine; by autocatalysis. Residue S265 is modified to Phosphoserine. Residues 290–310 are a coiled coil; sequence LRDLINEAMDVKLKRQESQQR. A compositionally biased stretch (basic and acidic residues) spans 303-312; the sequence is KRQESQQREV. A disordered region spans residues 303–332; that stretch reads KRQESQQREVDQDDEENSEEDEMDSGTMVR. Over residues 313-326 the composition is skewed to acidic residues; the sequence is DQDDEENSEEDEMD. Phosphoserine is present on S320. 2 positions are modified to phosphothreonine: T340 and T367. T387 carries the phosphothreonine; by PKB/AKT1 modification. S410 and S414 each carry phosphoserine. Y433 carries the phosphotyrosine modification. Residues 433-480 form the SARAH domain; the sequence is YEFLKSWTVEDLQKRLLALDPMMEQEIEEIRQKYQSKRQPILDAIEAK.

The protein belongs to the protein kinase superfamily. STE Ser/Thr protein kinase family. STE20 subfamily. Homodimer; mediated via the coiled-coil region. Interacts with NORE1, which inhibits autoactivation. Interacts with and stabilizes SAV1. Interacts with RASSF1. Interacts with FOXO3. Interacts with RASSF2 (via SARAH domain). Interacts with AR, PKB/AKT1, TNNI3 and SIRT1. Interacts with DLG5 (via PDZ domain 3). Interacts with MARK3 and SCRIB in the presence of DLG5. Mg(2+) serves as cofactor. Post-translationally, autophosphorylated on serine and threonine residues. Phosphorylation at Thr-387 by PKB/AKT1, leads to inhibition of its: kinase activity, nuclear translocation and autophosphorylation at Thr-183. It also diminishes its cleavage by caspases and its ability to phosphorylate FOXO3. In terms of processing, proteolytically cleaved by caspase-3 during apoptosis at Asp-326 and Asp-349 resulting in a 37 kDa or a 39 kDa subunit respectively. The 39 kDa subunit is further cleaved into the 37 kDa form. Proteolytic cleavage results in kinase activation and nuclear translocation of the truncated form (MST1/N). It is less likely that cleavage at Asp-349 is a prerequisite for activation as this site is not conserved in the murine ortholog.

The protein resides in the cytoplasm. Its subcellular location is the nucleus. It carries out the reaction L-seryl-[protein] + ATP = O-phospho-L-seryl-[protein] + ADP + H(+). It catalyses the reaction L-threonyl-[protein] + ATP = O-phospho-L-threonyl-[protein] + ADP + H(+). Inhibited by the C-terminal non-catalytic region. Activated by caspase-cleavage. Full activation also requires homodimerization and autophosphorylation of Thr-183. Activated by RASSF1 which acts by preventing its dephosphorylation. In terms of biological role, stress-activated, pro-apoptotic kinase which, following caspase-cleavage, enters the nucleus and induces chromatin condensation followed by internucleosomal DNA fragmentation. Key component of the Hippo signaling pathway which plays a pivotal role in organ size control and tumor suppression by restricting proliferation and promoting apoptosis. The core of this pathway is composed of a kinase cascade wherein STK3/MST2 and STK4/MST1, in complex with its regulatory protein SAV1, phosphorylates and activates LATS1/2 in complex with its regulatory protein MOB1, which in turn phosphorylates and inactivates YAP1 oncoprotein and WWTR1/TAZ. Phosphorylation of YAP1 by LATS2 inhibits its translocation into the nucleus to regulate cellular genes important for cell proliferation, cell death, and cell migration. STK3/MST2 and STK4/MST1 are required to repress proliferation of mature hepatocytes, to prevent activation of facultative adult liver stem cells (oval cells), and to inhibit tumor formation. Phosphorylates 'Ser-14' of histone H2B (H2BS14ph) during apoptosis. Phosphorylates FOXO3 upon oxidative stress, which results in its nuclear translocation and cell death initiation. Phosphorylates MOBKL1A, MOBKL1B and RASSF2. Phosphorylates TNNI3 (cardiac Tn-I) and alters its binding affinity to TNNC1 (cardiac Tn-C) and TNNT2 (cardiac Tn-T). Phosphorylates FOXO1 on 'Ser-212' and regulates its activation and stimulates transcription of PMAIP1 in a FOXO1-dependent manner. Phosphorylates SIRT1 and inhibits SIRT1-mediated p53/TP53 deacetylation, thereby promoting p53/TP53 dependent transcription and apoptosis upon DNA damage. Acts as an inhibitor of PKB/AKT1. Phosphorylates AR on 'Ser-650' and suppresses its activity by intersecting with PKB/AKT1 signaling and antagonizing formation of AR-chromatin complexes. The polypeptide is Serine/threonine-protein kinase 4 (STK4) (Aotus nancymaae (Ma's night monkey)).